The primary structure comprises 135 residues: Large ribosomal subunit protein uL16c (135 aa).

M1 is subject to N-methylmethionine.

In terms of assembly, component of the chloroplast large ribosomal subunit (LSU). Mature 70S chloroplast ribosomes of higher plants consist of a small (30S) and a large (50S) subunit. The 30S small subunit contains 1 molecule of ribosomal RNA (16S rRNA) and 24 different proteins. The 50S large subunit contains 3 rRNA molecules (23S, 5S and 4.5S rRNA) and 33 different proteins. In terms of processing, partially alpha-N-monomethylated at Met-1 (10%), whereas 90% of it is blocked to Edman degradation, probably by trimethylation.

The protein resides in the plastid. It localises to the chloroplast. Functionally, component of the chloroplast ribosome (chloro-ribosome), a dedicated translation machinery responsible for the synthesis of chloroplast genome-encoded proteins, including proteins of the transcription and translation machinery and components of the photosynthetic apparatus. This Spinacia oleracea (Spinach) protein is Large ribosomal subunit protein uL16c.